We begin with the raw amino-acid sequence, 116 residues long: NADH-ubiquinone oxidoreductase chain 3 (116 aa).

A run of 3 helical transmembrane segments spans residues 3-23 (LIST…LVSF), 56-76 (FFLI…LLPL), and 87-107 (LTFM…IYEW).

The protein belongs to the complex I subunit 3 family.

Its subcellular location is the mitochondrion membrane. The catalysed reaction is a ubiquinone + NADH + 5 H(+)(in) = a ubiquinol + NAD(+) + 4 H(+)(out). Functionally, core subunit of the mitochondrial membrane respiratory chain NADH dehydrogenase (Complex I) that is believed to belong to the minimal assembly required for catalysis. Complex I functions in the transfer of electrons from NADH to the respiratory chain. The immediate electron acceptor for the enzyme is believed to be ubiquinone. This is NADH-ubiquinone oxidoreductase chain 3 (MT-ND3) from Gadus morhua (Atlantic cod).